The sequence spans 138 residues: Putative pre-16S rRNA nuclease (138 aa).

This sequence belongs to the YqgF nuclease family.

The protein resides in the cytoplasm. In terms of biological role, could be a nuclease involved in processing of the 5'-end of pre-16S rRNA. The chain is Putative pre-16S rRNA nuclease from Azobacteroides pseudotrichonymphae genomovar. CFP2.